The sequence spans 145 residues: MIDINEILEILPHRFPFLLIDRVIDLQPGISIKAYKNVTFNEQIFQGHFPGHPIYPGVMIIEGMAQAGGVLAFKSTTDEDLSNKVVYFMTIDKAKFRQPIRPGDRLEYRLNVLKHRGRIWVLKGEALVDDKVAAEAELQAMIMDK.

His48 is a catalytic residue.

This sequence belongs to the thioester dehydratase family. FabZ subfamily.

The protein resides in the cytoplasm. It catalyses the reaction a (3R)-hydroxyacyl-[ACP] = a (2E)-enoyl-[ACP] + H2O. Functionally, involved in unsaturated fatty acids biosynthesis. Catalyzes the dehydration of short chain beta-hydroxyacyl-ACPs and long chain saturated and unsaturated beta-hydroxyacyl-ACPs. The sequence is that of 3-hydroxyacyl-[acyl-carrier-protein] dehydratase FabZ from Campylobacter hominis (strain ATCC BAA-381 / DSM 21671 / CCUG 45161 / LMG 19568 / NCTC 13146 / CH001A).